The chain runs to 212 residues: Ras-related protein Rab-2A (212 aa).

Position 2 is an N-acetylalanine (Ala-2). The required for interaction with PRKCI stretch occupies residues 2–19 (AYAYLFKYIIIGDTGVGK). The GTP site is built by Gly-16, Val-17, Gly-18, Lys-19, Ser-20, Cys-21, and Thr-38. Ser-20 contributes to the Mg(2+) binding site. The Switch 1 motif lies at 37-42 (LTIGVE). Residues Thr-38 and Asp-61 each contribute to the Mg(2+) site. A Switch 2 motif is present at residues 63–72 (AGQESFRSIT). GTP-binding residues include Gly-64, Asn-119, Lys-120, Asp-122, Ala-150, and Lys-151. The disordered stretch occupies residues 190-212 (QHAATNASHGSNQGGQQAGGGCC). Gly residues predominate over residues 201 to 212 (NQGGQQAGGGCC). S-geranylgeranyl cysteine attachment occurs at residues Cys-211 and Cys-212.

Belongs to the small GTPase superfamily. Rab family. In terms of assembly, interacts with PRKCI. Interacts with TRIP11. Interacts (in GTP-bound form) with GARIN1B. Interacts (GTP-bound) with HOPS complex component VPS39; interaction contributes to obtaining a functional HOPS complex that promotes autophagosome-lysosome membrane fusion driven by STX17-SNAP29-VAMP8. Interacts with VPS41. It depends on Mg(2+) as a cofactor. Prenylated. Prenylation is required for association with cellular membranes.

Its subcellular location is the endoplasmic reticulum-Golgi intermediate compartment membrane. The protein localises to the melanosome. It is found in the endoplasmic reticulum membrane. The protein resides in the golgi apparatus membrane. It localises to the cytoplasmic vesicle. Its subcellular location is the secretory vesicle. The protein localises to the acrosome. It is found in the autophagosome membrane. The catalysed reaction is GTP + H2O = GDP + phosphate + H(+). With respect to regulation, regulated by guanine nucleotide exchange factors (GEFs) which promote the exchange of bound GDP for free GTP, GTPase activating proteins (GAPs) which increase the GTP hydrolysis activity, and GDP dissociation inhibitors (GDIs) which inhibit the dissociation of the nucleotide from the GTPase. Functionally, the small GTPases Rab are key regulators of intracellular membrane trafficking, from the formation of transport vesicles to their fusion with membranes. Rabs cycle between active GTP-bound and inactive GDP-bound states. In their active state, drive transport of vesicular carriers from donor organelles to acceptor organelles to regulate the membrane traffic that maintains organelle identity and morphology. RAB2A regulates autophagy by promoting autophagosome-lysosome fusion via recruitment of the HOPS endosomal tethering complex; this process involves autophagosomal RAB2A and lysosomal RAB39A recruitment of HOPS subcomplexes VPS39-VPS11 and VPS41-VPS16-VPS18-VPS33A, respectively, which assemble into a functional complex to mediate membrane tethering and SNAREs-driven membrane fusion. Required for protein transport from the endoplasmic reticulum to the Golgi complex. Regulates the compacted morphology of the Golgi. Together with RAB2B, redundantly required for efficient autophagic flux. The chain is Ras-related protein Rab-2A from Mus musculus (Mouse).